The sequence spans 146 residues: Hemoglobin subunit beta (146 aa).

Val-1 carries the post-translational modification N-acetylvaline. Positions 2 to 146 (HLTGEEKAAV…VANALAHKYH (145 aa)) constitute a Globin domain. Thr-12 is modified (phosphothreonine). Ser-44 is subject to Phosphoserine. The residue at position 59 (Lys-59) is an N6-acetyllysine. Position 63 (His-63) interacts with heme b. Lys-82 carries the post-translational modification N6-acetyllysine. His-92 is a heme b binding site. Cys-93 bears the S-nitrosocysteine mark. Lys-144 carries the post-translational modification N6-acetyllysine.

It belongs to the globin family. Heterotetramer of two alpha chains and two beta chains. As to expression, red blood cells.

In terms of biological role, involved in oxygen transport from the lung to the various peripheral tissues. This is Hemoglobin subunit beta (HBB) from Aotus trivirgatus (Three-striped night monkey).